Here is a 380-residue protein sequence, read N- to C-terminus: cAMP-dependent protein kinase type I-alpha regulatory subunit (380 aa).

The residue at position 1 (methionine 1) is an N-acetylmethionine. Alanine 2 is subject to N-acetylalanine; in cAMP-dependent protein kinase type I-alpha regulatory subunit, N-terminally processed. The tract at residues 2–135 (ASGSTASEEE…ALAKAIEKNV (134 aa)) is dimerization and phosphorylation. Phosphoserine is present on residues serine 3, serine 76, and serine 82. Residues 64-96 (IQNLQKASARADSREDEISPPPPNPVVKGRRRR) form a disordered region. Residues 95–99 (RRGAI) carry the Pseudophosphorylation motif motif. Serine 100 carries the phosphoserine modification. 3',5'-cyclic AMP is bound by residues 136–253 (LFSH…SKVS), glutamate 201, arginine 210, 254–380 (ILES…SLSV), glutamate 325, and arginine 334. Phosphoserine is present on serine 257.

It belongs to the cAMP-dependent kinase regulatory chain family. The inactive holoenzyme is composed of two regulatory chains and two catalytic chains. Activation by cAMP releases the two active catalytic monomers and the regulatory dimer. Interacts with PRKACA and PRKACB. PRKAR1A also interacts with RFC2; the complex may be involved in cell survival. Interacts with AKAP4. Interacts with RARA; the interaction occurs in the presence of cAMP or FSH and regulates RARA transcriptional activity. Interacts with the phosphorylated form of PJA2. Interacts with CBFA2T3. Interacts with PRKX; regulates this cAMP-dependent protein kinase. Interacts with smAKAP; this interaction may target PRKAR1A to the plasma membrane. Interacts with AICDA. Post-translationally, the pseudophosphorylation site binds to the substrate-binding region of the catalytic chain, resulting in the inhibition of its activity. As to expression, four types of regulatory chains are found: I-alpha, I-beta, II-alpha, and II-beta. Their expression varies among tissues and is in some cases constitutive and in others inducible.

The protein localises to the cell membrane. Its function is as follows. Regulatory subunit of the cAMP-dependent protein kinases involved in cAMP signaling in cells. In Sus scrofa (Pig), this protein is cAMP-dependent protein kinase type I-alpha regulatory subunit (PRKAR1A).